A 651-amino-acid polypeptide reads, in one-letter code: MFLKRWFIRALHRLQKGPGYGYSELFVWYCNNTNTHGPKRLIIEGPKKKTLWSLFTVTFACLVFWQWGLLIQTYLSWGVSVSLSVGFRGMDFPAVTVCNVNPFKYSKVKPLLKELDELVDILLEQFYSYSTNGTLPVVFPDMRSSYLTGDPPPWYQIPLVMIDETDADNPTVTNVLGTDALSPTNNSTTNSSTEARRYKVAFHLCNTNGTDCFYKNFSSSLEAVKEWYTLQYIDIISKLPLSQKVEMGYSGKDFILTCLFGGEACNYDNFTQFYHSSYGNCYVFNWGLDGNVLIVSNPGVGFGLQLALDVNQEEYIPFLTTRAGARFLLHTQNTFPFVETMGTYALVGTVTSVGILVDEVQRMGQPYGTCTTDGLDVPIDNLYSQYNLSYTMQSCLWSCFQIQMVNSCGCAYYLYPLPEGATYCNNQNNSDWAYCYYLLQDSKDHKNECLQTCIQTCNELQFRISTSMADWPSESSEDWIFHVLSYERDDSTNITMKRDGVLKLNLYFKEFNYRVITESVATNVVWLLSNLGGQFGFWMGGSVLCIIEFGEVFIDCIWIAVIRFVKWYKNRKERQVQAQYADPPPTVSELVEGYTNQGFQPDIINSCSPQAQPPDLYLPTTLEIPGTPPPKYDSLRVHPIDTEHHSDSEDL.

Topologically, residues 1–50 are cytoplasmic; sequence MFLKRWFIRALHRLQKGPGYGYSELFVWYCNNTNTHGPKRLIIEGPKKKT. The helical transmembrane segment at 51 to 71 threads the bilayer; it reads LWSLFTVTFACLVFWQWGLLI. At 72–541 the chain is on the extracellular side; it reads QTYLSWGVSV…GGQFGFWMGG (470 aa). Cystine bridges form between Cys98-Cys281, Cys205-Cys212, Cys258-Cys265, Cys370-Cys457, Cys395-Cys453, Cys399-Cys449, Cys408-Cys435, and Cys410-Cys424. A helical transmembrane segment spans residues 542 to 562; that stretch reads SVLCIIEFGEVFIDCIWIAVI. Residues 563 to 651 are Cytoplasmic-facing; it reads RFVKWYKNRK…TEHHSDSEDL (89 aa). A disordered region spans residues 612-651; the sequence is QPPDLYLPTTLEIPGTPPPKYDSLRVHPIDTEHHSDSEDL. A compositionally biased stretch (basic and acidic residues) spans 633-651; that stretch reads DSLRVHPIDTEHHSDSEDL.

The protein belongs to the amiloride-sensitive sodium channel (TC 1.A.6) family. SCNN1B subfamily. In terms of assembly, component of the heterotrimeric epithelial sodium channel (ENaC) composed of an alpha/SCNN1A, a beta/SCNN1B and a gamma/SCNN1G subunit. In terms of tissue distribution, strongly expressed in gill, kidney and rectum and more weakly in brain, eye, liver and muscle.

The protein localises to the apical cell membrane. It is found in the cytoplasmic vesicle membrane. The enzyme catalyses Na(+)(in) = Na(+)(out). Originally identified and characterized by its inhibition by the diuretic drug amiloride. Functionally, this is one of the three pore-forming subunits of the heterotrimeric epithelial sodium channel (ENaC), a critical regulator of sodium balance and fluid homeostasis. ENaC operates in epithelial tissues, where it mediates the electrodiffusion of sodium ions from extracellular fluid through the apical membrane of cells, with water following osmotically. The polypeptide is Epithelial sodium channel subunit beta (Neoceratodus forsteri (Australian lungfish)).